Reading from the N-terminus, the 420-residue chain is MPVRVSEFSWQQTPATIFLSLPLRGVCVRDADVFCGESYLKVNFPPFLFELFLYAPIDDGKSKAKIGNDTILFTLYKKEPVLWDSLSVPGVDKEMMQRIREKSILQAQEKAKEATEAKAVAKREDQRYALGEMMKIEEEERKKIEDMKENERKKATSELEAWKECQKKADGQKRVQRKEKPLEGKQAEETKALKPRGLPRKAPPTRLPTRGRNWENIFPEKLKEDRVPAPRSAGSIQISFTPRVFPTALRESQVAEEEEWLHKQAEARRAMSTDLPEFFDLKEEERNPDWLKDKGNKLFATENYLAAVDAYNLAIRLNCKIPLLYLNRAACHLKLKNLHKAIEDSSKALELLTPPVADNANARMKAHVRRGTAFCQLELYVEGLQDYEAALKIDPANTVVQNDAEKIRNIIQGTALKSRD.

One can recognise a CS domain in the interval 3 to 87 (VRVSEFSWQQ…KEPVLWDSLS (85 aa)). Residues 7–103 (EFSWQQTPAT…EMMQRIREKS (97 aa)) are mediates interaction with ESR1 and STUB1. The span at 164–192 (ECQKKADGQKRVQRKEKPLEGKQAEETKA) shows a compositional bias: basic and acidic residues. A disordered region spans residues 164 to 212 (ECQKKADGQKRVQRKEKPLEGKQAEETKALKPRGLPRKAPPTRLPTRGR). 3 TPR repeats span residues 288-321 (PDWLKDKGNKLFATENYLAAVDAYNLAIRLNCKI), 322-355 (PLLYLNRAACHLKLKNLHKAIEDSSKALELLTPP), and 364-397 (MKAHVRRGTAFCQLELYVEGLQDYEAALKIDPAN).

As to quaternary structure, interacts with ZMYND10. Interacts with ESR1 and ESR2. Interacts with STUB1. Interacts with DNAAF2. Interacts with CCT3, CCT4, CCT5 and CCT8. Interacts with DNAAF6/PIH1D3.

It localises to the nucleus. Its subcellular location is the cytoplasm. It is found in the dynein axonemal particle. The protein resides in the cell projection. The protein localises to the neuron projection. Involved in neuronal migration during development of the cerebral neocortex. May regulate the stability and proteasomal degradation of the estrogen receptors that play an important role in neuronal differentiation, survival and plasticity. Axonemal dynein assembly factor required for ciliary motility. The chain is Dynein axonemal assembly factor 4 from Mus musculus (Mouse).